A 1755-amino-acid chain; its full sequence is E3 ubiquitin-protein ligase UBR2 (1755 aa).

At Ala-2 the chain carries N-acetylalanine. Residue Lys-94 forms a Glycyl lysine isopeptide (Lys-Gly) (interchain with G-Cter in ubiquitin) linkage. A UBR-type zinc finger spans residues 97–168; sequence HLCGRVFKVG…EGPYCQKHEL (72 aa). Zn(2+) is bound by residues Cys-99, Cys-112, Cys-115, Cys-124, Cys-127, His-133, and His-136. Phe-148 lines the a peptide pocket. Cys-149 contributes to the Zn(2+) binding site. Residue Asp-150 participates in a peptide binding. Residue Cys-151 participates in Zn(2+) binding. A peptide is bound at residue Asp-153. Lys-158 is covalently cross-linked (Glycyl lysine isopeptide (Lys-Gly) (interchain with G-Cter in ubiquitin)). Residue Cys-163 coordinates Zn(2+). A Glycyl lysine isopeptide (Lys-Gly) (interchain with G-Cter in ubiquitin) cross-link involves residue Lys-165. Zn(2+) is bound at residue His-166. Glycyl lysine isopeptide (Lys-Gly) (interchain with G-Cter in ubiquitin) cross-links involve residues Lys-248, Lys-255, and Lys-470. Phosphoserine is present on Ser-476. Glycyl lysine isopeptide (Lys-Gly) (interchain with G-Cter in ubiquitin) cross-links involve residues Lys-488, Lys-568, Lys-779, and Lys-789. Positions 1004–1034 are disordered; the sequence is ESSPTSPVAETEGTIMEESSRDKDKAERKRK. Residues 1019 to 1054 are a coiled coil; that stretch reads MEESSRDKDKAERKRKAEIARLRREKIMAQMSEMQR. The segment covering 1021-1034 has biased composition (basic and acidic residues); it reads ESSRDKDKAERKRK. Cys-1108, Cys-1111, Cys-1168, His-1170, His-1173, Cys-1176, Cys-1210, and Cys-1213 together coordinate Zn(2+). An RING-type; atypical zinc finger spans residues 1108 to 1214; the sequence is CILCQEEQEV…NGEFLCPLCE (107 aa). Residues 1261-1287 are disordered; the sequence is RKEESTPNNASTKNSENVDELQLPEGF. The segment covering 1266-1275 has biased composition (polar residues); the sequence is TPNNASTKNS. Glycyl lysine isopeptide (Lys-Gly) (interchain with G-Cter in ubiquitin) cross-links involve residues Lys-1496, Lys-1599, and Lys-1689. A Phosphoserine modification is found at Ser-1694. Tyr-1697 is modified (phosphotyrosine).

It belongs to the E3 ubiquitin-protein ligase UBR1-like family. Interacts with UBE2B; promotes the UBE2B-H2A interaction and the ubiquitination of histone H2A by UBE2B and UBR2. Interacts with RECQL4. Interacts with TEX19; does not lead to TEX19 degradation and stabilizes it. Interacts with CASP8. Interacts with ATXN3. Interacts with UBE2O. In terms of processing, dephosphorylated by DUSP22 at Ser-1694 and Tyr-1697, leading to subsequent ubiquitination and proteasomal degradation. Post-translationally, 'Lys-48'-linked ubiquitinated at Lys-94, Lys-779 and Lys-1599 following DUSP22-mediated dephosphorylation of Ser-1694 and Tyr-1697 which promotes UBR2 interaction with the SCF(FBW1A) E3 ubiquitin-protein ligase complex. In terms of tissue distribution, broadly expressed, with highest levels in skeletal muscle, kidney and pancreas. Present in acinar cells of the pancreas (at protein level).

It localises to the nucleus. Its subcellular location is the chromosome. The catalysed reaction is S-ubiquitinyl-[E2 ubiquitin-conjugating enzyme]-L-cysteine + [acceptor protein]-L-lysine = [E2 ubiquitin-conjugating enzyme]-L-cysteine + N(6)-ubiquitinyl-[acceptor protein]-L-lysine.. It functions in the pathway protein modification; protein ubiquitination. Its function is as follows. E3 ubiquitin-protein ligase which is a component of the N-end rule pathway. Recognizes and binds to proteins bearing specific N-terminal residues (N-degrons) that are destabilizing according to the N-end rule, leading to their ubiquitination and subsequent degradation. Recognizes both type-1 and type-2 N-degrons, containing positively charged amino acids (Arg, Lys and His) and bulky and hydrophobic amino acids, respectively. Does not ubiquitinate proteins that are acetylated at the N-terminus. In contrast, it strongly binds methylated N-degrons. Plays a critical role in chromatin inactivation and chromosome-wide transcriptional silencing during meiosis via ubiquitination of histone H2A. Binds leucine and is a negative regulator of the leucine-mTOR signaling pathway, thereby controlling cell growth. Required for spermatogenesis, promotes, with Tex19.1, SPO11-dependent recombination foci to accumulate and drive robust homologous chromosome synapsis. Polyubiquitinates LINE-1 retrotransposon encoded, LIRE1, which induces degradation, inhibiting LINE-1 retrotransposon mobilization. Catalyzes ubiquitination and degradation of the N-terminal part of NLRP1 following NLRP1 activation by pathogens and other damage-associated signals: ubiquitination promotes degradation of the N-terminal part and subsequent release of the cleaved C-terminal part of NLRP1, which polymerizes and forms the NLRP1 inflammasome followed by host cell pyroptosis. Plays a role in T-cell receptor signaling by inducing 'Lys-63'-linked ubiquitination of lymphocyte cell-specific kinase LCK. This activity is regulated by DUSP22, which induces 'Lys-48'-linked ubiquitination of UBR2, leading to its proteasomal degradation by SCF E3 ubiquitin-protein ligase complex. This chain is E3 ubiquitin-protein ligase UBR2 (UBR2), found in Homo sapiens (Human).